Consider the following 424-residue polypeptide: Hemagglutinin-esterase (424 aa).

Positions 1–16 (MFLLPRFVLVSCIIGS) are cleaved as a signal peptide. The segment at 7–127 (FVLVSCIIGS…SNDIWMQNKG (121 aa)) is esterase domain 1. Over 17-392 (LGFDNPPTNV…PICVYDPLPI (376 aa)) the chain is Virion surface. The active-site Nucleophile is serine 40. Residues cysteine 44 and cysteine 65 are joined by a disulfide bond. N-linked (GlcNAc...) asparagine; by host glycosylation is found at asparagine 54, asparagine 89, asparagine 153, asparagine 236, and asparagine 301. Disulfide bonds link cysteine 113-cysteine 162, cysteine 197-cysteine 276, and cysteine 205-cysteine 249. The interval 128–266 (LFYTQVYKNM…GNYLAISNEL (139 aa)) is receptor binding. Residues 267–379 (LLTVPTKAIC…RCPTAADINT (113 aa)) are esterase domain 2. An intrachain disulfide couples cysteine 307 to cysteine 312. N-linked (GlcNAc...) asparagine; by host glycosylation is present at asparagine 316. Catalysis depends on charge relay system residues aspartate 326 and histidine 329. A disulfide bridge links cysteine 347 with cysteine 371. Asparagine 358 is a glycosylation site (N-linked (GlcNAc...) asparagine; by host). Residues 393–413 (ILLGILLGVAVIIIVVLLLYF) traverse the membrane as a helical segment. Residues 414–424 (MVDNGTRLHDA) lie on the Intravirion side of the membrane. N-linked (GlcNAc...) asparagine; by host glycosylation occurs at asparagine 417.

The protein belongs to the influenza type C/coronaviruses hemagglutinin-esterase family. As to quaternary structure, homodimer; disulfide-linked. Forms a complex with the M protein in the pre-Golgi. Associates then with S-M complex to form a ternary complex S-M-HE. In terms of processing, N-glycosylated in the RER. Post-translationally, N-glycosylated in the host RER.

The protein resides in the virion membrane. It is found in the host cell membrane. The catalysed reaction is N-acetyl-9-O-acetylneuraminate + H2O = N-acetylneuraminate + acetate + H(+). It catalyses the reaction N-acetyl-4-O-acetylneuraminate + H2O = N-acetylneuraminate + acetate + H(+). In terms of biological role, structural protein that makes short spikes at the surface of the virus. Contains receptor binding and receptor-destroying activities. Mediates de-O-acetylation of N-acetyl-4-O-acetylneuraminic acid, which is probably the receptor determinant recognized by the virus on the surface of erythrocytes and susceptible cells. This receptor-destroying activity is important for virus release as it probably helps preventing self-aggregation and ensures the efficient spread of the progeny virus from cell to cell. May serve as a secondary viral attachment protein for initiating infection, the spike protein being the major one. May become a target for both the humoral and the cellular branches of the immune system. This chain is Hemagglutinin-esterase, found in Bovine coronavirus (strain 98TXSF-110-ENT) (BCoV-ENT).